A 209-amino-acid polypeptide reads, in one-letter code: CASP-like protein 2A2 (209 aa).

Over 1-37 (MSKTAGVGRLGGARAADAAQQQQLAAGDAAVARAARP) the chain is Cytoplasmic. The helical transmembrane segment at 38–58 (IETLLRAAPLVLCVAAMTLML) threads the bilayer. Topologically, residues 59 to 79 (RDQQSNEYGTVAYSDLGGFKY) are extracellular. The chain crosses the membrane as a helical span at residues 80 to 100 (LVYANGLCAAYSLASAFYTAV). Residues 101–109 (PRPATVSRS) are Cytoplasmic-facing. The chain crosses the membrane as a helical span at residues 110-130 (WVVFLLDQVFTYLILAAGAAA). Residues 131-161 (AELLYLAYNGDKEVTWSEACGVFGSFCRQAR) lie on the Extracellular side of the membrane. A helical membrane pass occupies residues 162 to 182 (ISVAITFGAVLCFILLSLLSS). The Cytoplasmic portion of the chain corresponds to 183 to 209 (YRLFSAYEAPPPSALGSKGVEIAAYPR).

This sequence belongs to the Casparian strip membrane proteins (CASP) family. As to quaternary structure, homodimer and heterodimers.

It is found in the cell membrane. This is CASP-like protein 2A2 from Zea mays (Maize).